We begin with the raw amino-acid sequence, 503 residues long: MTLDQVRIPFLVEQTYPIIVPSYAGWFDMSKIHDIERRSNPEFFNGKSPLKTPSIYKDYRDFMINSYRLEPNEYLTVTACRRNLVGDVCAIIRVHAFLEQWGLINYQIDPETRPAFRLPPISGHVQAISNTPIVTQEMLAQHPPPSTVGGSSSQEFVKLEEKHYSPSLNAMEQTSPKEEDEKSDKVPRVDKVCFTCGVNCSQTWYHNLKNKKYDICPNCYKQGRFSSSFNSSDFLCMDAIDFNHDEEKPWSNQETLLLLEAIETYGDDWNQIALHVGSRTKEQCLIHFLQIPIEDPYRQKLQGDFSPFKKGFLPFDENENPVLSTLTYLASIVQQGMKERKQNESVKQGETSFGNSEFKNPLERVAYYALKSAAQKAKLIAAFENRQLRRLVFSLIQAQLEKLQLKMKVLEQLEKMCSLELSELDLRGKNLLLSRLSTKKMLLAFNKKLEEAVNLGGEDGLKIIDDLMSTEHAEALLTFEMPTATTVSPLSKQYPDKFRTIAL.

One can recognise an SWIRM domain in the interval 18-115 (IIVPSYAGWF…YQIDPETRPA (98 aa)). Ser175 is modified (phosphoserine). The segment at 188–242 (RVDKVCFTCGVNCSQTWYHNLKNKKYDICPNCYKQGRFSSSFNSSDFLCMDAIDF) adopts a ZZ-type; degenerate zinc-finger fold. Residues Cys193, Cys196, Cys216, and Cys219 each contribute to the Zn(2+) site. Residues 245 to 296 (DEEKPWSNQETLLLLEAIETYGDDWNQIALHVGSRTKEQCLIHFLQIPIEDP) enclose the SANT domain. Ser306 carries the phosphoserine modification.

Belongs to the SMARCC family. As to quaternary structure, component of the RSC complex composed of at least arp9, arp42, rsc1, rsc4, rsc7, rsc9, rsc58, sfh1, snf21, ssr1, ssr2, ssr3 and ssr4. The complex interacts with histone and histone variant components of centromeric chromatin. Component of the SWI/SNF global transcription activator complex composed of at least arp9, arp42, snf5, snf22, snf30, sbf59, sol1, ssr1, ssr2, ssr3, ssr4 and tfg3.

The protein localises to the cytoplasm. It localises to the nucleus. Functionally, component of the chromatin structure remodeling complex (RSC), which is involved in transcription regulation and nucleosome positioning. Controls particularly membrane and organelle development genes. Part of the SWI/SNF complex, an ATP-dependent chromatin remodeling complex, required for the positive and negative regulation of gene expression of a large number of genes. It changes chromatin structure by altering DNA-histone contacts within a nucleosome, leading eventually to a change in nucleosome position, thus facilitating or repressing binding of gene-specific transcription factors. This chain is SWI/SNF and RSC complexes subunit ssr2 (ssr2), found in Schizosaccharomyces pombe (strain 972 / ATCC 24843) (Fission yeast).